We begin with the raw amino-acid sequence, 366 residues long: DNA-directed RNA polymerase subunit alpha (366 aa).

The alpha N-terminal domain (alpha-NTD) stretch occupies residues 1–233 (MVREKVRVST…DLFLPFLHAE (233 aa)). The tract at residues 264–366 (KNEIALKSIF…KDEMGFESLE (103 aa)) is alpha C-terminal domain (alpha-CTD).

This sequence belongs to the RNA polymerase alpha chain family. In plastids the minimal PEP RNA polymerase catalytic core is composed of four subunits: alpha, beta, beta', and beta''. When a (nuclear-encoded) sigma factor is associated with the core the holoenzyme is formed, which can initiate transcription.

Its subcellular location is the plastid. The protein localises to the chloroplast. The catalysed reaction is RNA(n) + a ribonucleoside 5'-triphosphate = RNA(n+1) + diphosphate. DNA-dependent RNA polymerase catalyzes the transcription of DNA into RNA using the four ribonucleoside triphosphates as substrates. The sequence is that of DNA-directed RNA polymerase subunit alpha from Oenothera elata subsp. hookeri (Hooker's evening primrose).